We begin with the raw amino-acid sequence, 177 residues long: Bifunctional protein PyrR (177 aa).

A PRPP-binding motif is present at residues 99–111; the sequence is VVLVDDVLYTGRT.

The protein belongs to the purine/pyrimidine phosphoribosyltransferase family. PyrR subfamily. As to quaternary structure, homodimer and homohexamer; in equilibrium.

It catalyses the reaction UMP + diphosphate = 5-phospho-alpha-D-ribose 1-diphosphate + uracil. In terms of biological role, regulates transcriptional attenuation of the pyrimidine nucleotide (pyr) operon by binding in a uridine-dependent manner to specific sites on pyr mRNA. This disrupts an antiterminator hairpin in the RNA and favors formation of a downstream transcription terminator, leading to a reduced expression of downstream genes. Also displays a weak uracil phosphoribosyltransferase activity which is not physiologically significant. This chain is Bifunctional protein PyrR, found in Clostridioides difficile (strain 630) (Peptoclostridium difficile).